The chain runs to 344 residues: Zinc transporter 9 (344 aa).

A helical membrane pass occupies residues 1–21 (MASILISGAAGVSIPLVGTLL). The Cytoplasmic segment spans residues 22-30 (PLNGGLMRG). Residues 31 to 51 (AKAFAAGVILATGFVHMLSGG) form a helical membrane-spanning segment. Over 52-72 (SKALSDPCLPEFPWKMFPFPE) the chain is Extracellular. Residues 73–93 (FFAMVAALLTLLADFMITGYY) form a helical membrane-spanning segment. Residues 94 to 188 (ERKQEKMMNQ…DVGLDSGVRH (95 aa)) are Cytoplasmic-facing. Residues 189–209 (VVVSQILEMGIVSHSIIIGIS) traverse the membrane as a helical segment. At 210–221 (LGVSHSPCTIRP) the chain is on the extracellular side. Residues 222–242 (LLLALSFHQFFEGFALGGCVA) traverse the membrane as a helical segment. Topologically, residues 243 to 251 (EARLTPRGS) are cytoplasmic. The helical transmembrane segment at 252–272 (AMMAFFFAITTPIGVAVGTAI) threads the bilayer. Residues 273–291 (ASSYNSYSVAALVAEGVLD) lie on the Extracellular side of the membrane. Residues 292–312 (SLSAGILVYMALVDLIAADFL) form a helical membrane-spanning segment. Topologically, residues 313 to 323 (SKKMSVDFRVQ) are cytoplasmic. The helical transmembrane segment at 324-344 (VVSYCFLFLGAGMMSALAIWA) threads the bilayer.

Belongs to the ZIP transporter (TC 2.A.5) family.

It is found in the cell membrane. Its function is as follows. Zinc transporter involved in zinc uptake in roots. Targeted by BZIP19 transcription factor in response to zinc-deficient conditions. The polypeptide is Zinc transporter 9 (ZIP9) (Arabidopsis thaliana (Mouse-ear cress)).